The primary structure comprises 417 residues: UDP-N-acetylglucosamine 1-carboxyvinyltransferase (417 aa).

22–23 (KN) serves as a coordination point for phosphoenolpyruvate. Residue R93 coordinates UDP-N-acetyl-alpha-D-glucosamine. The Proton donor role is filled by C117. Position 117 is a 2-(S-cysteinyl)pyruvic acid O-phosphothioketal (C117). Residues 122–126 (RPVDL), D305, and I327 each bind UDP-N-acetyl-alpha-D-glucosamine.

It belongs to the EPSP synthase family. MurA subfamily.

It localises to the cytoplasm. The catalysed reaction is phosphoenolpyruvate + UDP-N-acetyl-alpha-D-glucosamine = UDP-N-acetyl-3-O-(1-carboxyvinyl)-alpha-D-glucosamine + phosphate. The protein operates within cell wall biogenesis; peptidoglycan biosynthesis. Cell wall formation. Adds enolpyruvyl to UDP-N-acetylglucosamine. This Thiobacillus denitrificans (strain ATCC 25259 / T1) protein is UDP-N-acetylglucosamine 1-carboxyvinyltransferase.